A 424-amino-acid chain; its full sequence is Protein maelstrom 1 (424 aa).

A DNA-binding region (HMG box) is located at residues 2-69; the sequence is PPKKHSGFMM…LTRVKKERLN (68 aa).

This sequence belongs to the maelstrom family.

Its subcellular location is the cytoplasm. The protein resides in the nucleus. Its function is as follows. Involved both in the piRNA and miRNA metabolic processes. As a component of the meiotic nuage, plays a central role during oogenesis by repressing transposable elements and preventing their mobilization, which is essential for the germline integrity. Repression of transposable elements is mediated via the piRNA metabolic process, which mediates the repression of transposable elements during meiosis by forming complexes composed of piRNAs and Piwi proteins and governs the repression of transposons. As a nuclear component, it is required for proper differentiation in the germline stem cell (GSC) lineage by repressing microRNA-7 (miR-7), thereby acting as an indirect regulator of bag-of-marbles (Bam). Acts by binding to the promoter of miR-7 gene and repressing its expression; miR-7 repression alleviates the Bam repression by miR-7, thereby allowing differentiation in the germline stem cell (GSC) lineage. This is Protein maelstrom 1 (mael1) from Drosophila ananassae (Fruit fly).